The following is a 1287-amino-acid chain: Cell adhesion molecule-related/down-regulated by oncogenes (1287 aa).

Residues 1 to 25 form the signal peptide; that stretch reads MHPDLGPLCTLLYVTLTILCSSVSS. Topologically, residues 26–963 are extracellular; that stretch reads DLAPYFTSEP…PATSPARSSD (938 aa). Ig-like C2-type domains follow at residues 29 to 114, 120 to 204, 225 to 303, 310 to 396, and 405 to 516; these read PYFT…ATVS, DFGS…LKVE, PTHS…KYVT, EHAS…GRLE, and PVII…ASLM. Residues C50 and C97 are joined by a disulfide bond. N-linked (GlcNAc...) asparagine glycosylation is found at N88, N100, N180, N287, N294, N342, and N427. 2 cysteine pairs are disulfide-bonded: C141–C191 and C243–C290. Disulfide bonds link C333–C380 and C426–C500. The tract at residues 531 to 553 is disordered; the sequence is LPDAAQNDDRSKRDGSETGLLSS. Basic and acidic residues predominate over residues 537-546; the sequence is NDDRSKRDGS. N570 carries N-linked (GlcNAc...) asparagine glycosylation. Fibronectin type-III domains follow at residues 579-677, 723-821, and 826-926; these read APII…SKEK, APDR…FPNR, and PITG…TKVK. The N-linked (GlcNAc...) asparagine glycan is linked to N873. The tract at residues 933 to 955 is disordered; sequence EYPVKDLSTPPNSLGSGGNVGPA. A helical transmembrane segment spans residues 964–984; sequence MLYLIVGCVLGVMVLILMVFI. At 985–1287 the chain is on the cytoplasmic side; it reads AMCLWKNRQQ…TEVLQQPRET (303 aa). The disordered stretch occupies residues 1268-1287; it reads SPPGIPLDSPTEVLQQPRET.

Part of a complex that contains BOC, CDON, NEO1, cadherins and CTNNB1. Interacts with NTN3. Interacts with PTCH1. Interacts with GAS1. Interacts with DHH, IHH and SHH. N-glycosylated.

It localises to the cell membrane. In terms of biological role, component of a cell-surface receptor complex that mediates cell-cell interactions between muscle precursor cells. Promotes differentiation of myogenic cells. This chain is Cell adhesion molecule-related/down-regulated by oncogenes (CDON), found in Homo sapiens (Human).